The primary structure comprises 138 residues: Transcription antitermination protein NusB (138 aa).

This sequence belongs to the NusB family.

Functionally, involved in transcription antitermination. Required for transcription of ribosomal RNA (rRNA) genes. Binds specifically to the boxA antiterminator sequence of the ribosomal RNA (rrn) operons. This Helicobacter acinonychis (strain Sheeba) protein is Transcription antitermination protein NusB.